The following is a 109-amino-acid chain: Flagellar hook-basal body complex protein FliE (109 aa).

Belongs to the FliE family.

Its subcellular location is the bacterial flagellum basal body. The polypeptide is Flagellar hook-basal body complex protein FliE (Pseudomonas fluorescens (strain SBW25)).